The sequence spans 736 residues: DNA topoisomerase 4 subunit A (736 aa).

The region spanning 32 to 496 (LPDVRDGLKP…SFEQVTLTNQ (465 aa)) is the Topo IIA-type catalytic domain. The active-site O-(5'-phospho-DNA)-tyrosine intermediate is Tyr-120.

This sequence belongs to the type II topoisomerase GyrA/ParC subunit family. ParC type 1 subfamily. In terms of assembly, heterotetramer composed of ParC and ParE.

Its subcellular location is the cell membrane. It catalyses the reaction ATP-dependent breakage, passage and rejoining of double-stranded DNA.. Topoisomerase IV is essential for chromosome segregation. It relaxes supercoiled DNA. Performs the decatenation events required during the replication of a circular DNA molecule. This chain is DNA topoisomerase 4 subunit A, found in Rickettsia bellii (strain RML369-C).